Reading from the N-terminus, the 190-residue chain is Prostaglandin-H2 D-isomerase (190 aa).

Residues Met-1–Ala-22 form the signal peptide. Asn-51 carries an N-linked (GlcNAc...) asparagine glycan. Cys-65 functions as the Nucleophile in the catalytic mechanism. Asn-78 carries an N-linked (GlcNAc...) asparagine glycan. Cysteines 89 and 186 form a disulfide.

This sequence belongs to the calycin superfamily. Lipocalin family. As to quaternary structure, monomer.

The protein localises to the rough endoplasmic reticulum. It is found in the nucleus membrane. Its subcellular location is the golgi apparatus. It localises to the cytoplasm. The protein resides in the perinuclear region. The protein localises to the secreted. It catalyses the reaction prostaglandin H2 = prostaglandin D2. Its function is as follows. Catalyzes the conversion of PGH2 to PGD2, a prostaglandin involved in smooth muscle contraction/relaxation and a potent inhibitor of platelet aggregation. Involved in a variety of CNS functions, such as sedation, NREM sleep and PGE2-induced allodynia, and may have an anti-apoptotic role in oligodendrocytes. Binds small non-substrate lipophilic molecules, including biliverdin, bilirubin, retinal, retinoic acid and thyroid hormone, and may act as a scavenger for harmful hydrophobic molecules and as a secretory retinoid and thyroid hormone transporter. Possibly involved in development and maintenance of the blood-brain, blood-retina, blood-aqueous humor and blood-testis barrier. It is likely to play important roles in both maturation and maintenance of the central nervous system and male reproductive system. Involved in PLA2G3-dependent maturation of mast cells. PLA2G3 is secreted by immature mast cells and acts on nearby fibroblasts upstream to PTDGS to synthesize PGD2, which in turn promotes mast cell maturation and degranulation via PTGDR. In Macaca fuscata fuscata (Japanese macaque), this protein is Prostaglandin-H2 D-isomerase (PTGDS).